Reading from the N-terminus, the 715-residue chain is Polyribonucleotide nucleotidyltransferase (715 aa).

Mg(2+) is bound by residues Asp-491 and Asp-497. Residues 558–617 (PKIMTMTINPEKIRDVIGPQGRVINKIIEETGVKIDIEQDGRVFIASINHEANLRAKQII) enclose the KH domain. In terms of domain architecture, S1 motif spans 627–695 (GQVYLGTVKR…DQGRVNLSRK (69 aa)).

Belongs to the polyribonucleotide nucleotidyltransferase family. Mg(2+) is required as a cofactor.

The protein resides in the cytoplasm. It carries out the reaction RNA(n+1) + phosphate = RNA(n) + a ribonucleoside 5'-diphosphate. In terms of biological role, involved in mRNA degradation. Catalyzes the phosphorolysis of single-stranded polyribonucleotides processively in the 3'- to 5'-direction. This is Polyribonucleotide nucleotidyltransferase from Brevibacillus brevis (strain 47 / JCM 6285 / NBRC 100599).